A 429-amino-acid polypeptide reads, in one-letter code: 3-phosphoshikimate 1-carboxyvinyltransferase (429 aa).

The 3-phosphoshikimate site is built by Lys11, Ser12, and Arg16. Lys11 lines the phosphoenolpyruvate pocket. Residues Gly82 and Arg110 each coordinate phosphoenolpyruvate. 3-phosphoshikimate contacts are provided by Ser155, Gln157, Asp302, and Lys329. Gln157 is a phosphoenolpyruvate binding site. The Proton acceptor role is filled by Asp302. Arg333 and Arg385 together coordinate phosphoenolpyruvate.

This sequence belongs to the EPSP synthase family. In terms of assembly, monomer.

The protein resides in the cytoplasm. The enzyme catalyses 3-phosphoshikimate + phosphoenolpyruvate = 5-O-(1-carboxyvinyl)-3-phosphoshikimate + phosphate. It participates in metabolic intermediate biosynthesis; chorismate biosynthesis; chorismate from D-erythrose 4-phosphate and phosphoenolpyruvate: step 6/7. Its function is as follows. Catalyzes the transfer of the enolpyruvyl moiety of phosphoenolpyruvate (PEP) to the 5-hydroxyl of shikimate-3-phosphate (S3P) to produce enolpyruvyl shikimate-3-phosphate and inorganic phosphate. The protein is 3-phosphoshikimate 1-carboxyvinyltransferase of Helicobacter acinonychis (strain Sheeba).